We begin with the raw amino-acid sequence, 303 residues long: Glycine--tRNA ligase alpha subunit (303 aa).

The protein belongs to the class-II aminoacyl-tRNA synthetase family. As to quaternary structure, tetramer of two alpha and two beta subunits.

It is found in the cytoplasm. The enzyme catalyses tRNA(Gly) + glycine + ATP = glycyl-tRNA(Gly) + AMP + diphosphate. The polypeptide is Glycine--tRNA ligase alpha subunit (Klebsiella pneumoniae subsp. pneumoniae (strain ATCC 700721 / MGH 78578)).